The following is a 199-amino-acid chain: 3-isopropylmalate dehydratase small subunit (199 aa).

The protein belongs to the LeuD family. LeuD type 1 subfamily. In terms of assembly, heterodimer of LeuC and LeuD.

It carries out the reaction (2R,3S)-3-isopropylmalate = (2S)-2-isopropylmalate. It functions in the pathway amino-acid biosynthesis; L-leucine biosynthesis; L-leucine from 3-methyl-2-oxobutanoate: step 2/4. Its function is as follows. Catalyzes the isomerization between 2-isopropylmalate and 3-isopropylmalate, via the formation of 2-isopropylmaleate. This Leifsonia xyli subsp. xyli (strain CTCB07) protein is 3-isopropylmalate dehydratase small subunit.